A 336-amino-acid chain; its full sequence is HTH-type transcriptional repressor PurR (336 aa).

The HTH lacI-type domain occupies 2-56 (ATIKDVAKMAGVSTTTVSHVINKTRFVAKDTEEAVLSAIKQLNYSPSAVARSLKV). Positions 4 to 23 (IKDVAKMAGVSTTTVSHVIN) form a DNA-binding region, H-T-H motif. A DNA-binding region spans residues 48-56 (SAVARSLKV). Residues Y73, K188, T190, F219, and D273 each coordinate hypoxanthine.

Homodimer.

It functions in the pathway purine metabolism; purine nucleotide biosynthesis [regulation]. Functionally, is the main repressor of the genes involved in the de novo synthesis of purine nucleotides, regulating purB, purC, purEK, purF, purHD, purL, purMN and guaBA expression. PurR is allosterically activated to bind its cognate DNA by binding the purine corepressors, hypoxanthine or guanine, thereby effecting transcription repression. The chain is HTH-type transcriptional repressor PurR from Haemophilus influenzae (strain ATCC 51907 / DSM 11121 / KW20 / Rd).